The primary structure comprises 604 residues: Elongation factor 4 (604 aa).

The tr-type G domain occupies 9 to 191 (DAIRNFCIIA…AVISRVPAPA (183 aa)). GTP contacts are provided by residues 21 to 26 (DHGKST) and 138 to 141 (NKID).

Belongs to the TRAFAC class translation factor GTPase superfamily. Classic translation factor GTPase family. LepA subfamily.

It is found in the cell inner membrane. The enzyme catalyses GTP + H2O = GDP + phosphate + H(+). Functionally, required for accurate and efficient protein synthesis under certain stress conditions. May act as a fidelity factor of the translation reaction, by catalyzing a one-codon backward translocation of tRNAs on improperly translocated ribosomes. Back-translocation proceeds from a post-translocation (POST) complex to a pre-translocation (PRE) complex, thus giving elongation factor G a second chance to translocate the tRNAs correctly. Binds to ribosomes in a GTP-dependent manner. The sequence is that of Elongation factor 4 from Prosthecochloris aestuarii (strain DSM 271 / SK 413).